Here is a 131-residue protein sequence, read N- to C-terminus: Snaclec A13 (131 aa).

Disulfide bonds link Cys4–Cys15, Cys32–Cys125, and Cys100–Cys117. Residues 11-126 (YEGHCYKVFN…CELAYHFICM (116 aa)) enclose the C-type lectin domain.

It belongs to the snaclec family. Heterodimer; disulfide-linked. As to expression, expressed by the venom gland.

It localises to the secreted. Functionally, interferes with one step of hemostasis (modulation of platelet aggregation, or coagulation cascade, for example). In Macrovipera lebetinus (Levantine viper), this protein is Snaclec A13.